A 314-amino-acid chain; its full sequence is GTP cyclohydrolase FolE2 (314 aa).

Residues 290 to 314 (DASAWSAPQAAAPDQQESFATGNER) are disordered. A compositionally biased stretch (low complexity) spans 291–304 (ASAWSAPQAAAPDQ). Polar residues predominate over residues 305-314 (QESFATGNER).

Belongs to the GTP cyclohydrolase IV family.

It carries out the reaction GTP + H2O = 7,8-dihydroneopterin 3'-triphosphate + formate + H(+). Its pathway is cofactor biosynthesis; 7,8-dihydroneopterin triphosphate biosynthesis; 7,8-dihydroneopterin triphosphate from GTP: step 1/1. Functionally, converts GTP to 7,8-dihydroneopterin triphosphate. The sequence is that of GTP cyclohydrolase FolE2 from Pseudomonas putida (strain ATCC 47054 / DSM 6125 / CFBP 8728 / NCIMB 11950 / KT2440).